A 352-amino-acid polypeptide reads, in one-letter code: Divinyl chlorophyll a/b light-harvesting protein PcbA (352 aa).

Transmembrane regions (helical) follow at residues 27–47 (FIAAHVAHAGLIVFWAGAFTL), 90–110 (VLAIAIVHLVSSMVLAAGGLL), 142–162 (FILGHHLIILGFAVILLVEWA), 203–223 (VMGGHAFLAFVLITGGAWHIA), 243–263 (AVLSWSLAGIGWMAIIAAFWS), and 306–326 (LANVHYYFGFFFIQGHLWHAL).

This sequence belongs to the PsbB/PsbC family. IsiA/Pcb subfamily. In terms of assembly, the antenna complex consists of divinyl chlorophylls (a and b) and divinyl chlorophyll a/b binding proteins and binds less divinyl chlorophyll b than does low-light-adapted Prochlorococcus. Also forms complexes with PSII, consisting of a PSII dimer and 4 or 8 PcbA subunits. These complexes are also found under conditions of iron-starvation. The cofactor is divinyl chlorophyll a. Divinyl chlorophyll b is required as a cofactor.

It localises to the cellular thylakoid membrane. In terms of biological role, the antenna complex functions as a light receptor, it captures and delivers excitation energy to photosystem II and possibly to photosystem I. The Prochlorales pcb genes are not related to higher plant LHCs. The chain is Divinyl chlorophyll a/b light-harvesting protein PcbA (pcbA) from Prochlorococcus marinus subsp. pastoris (strain CCMP1986 / NIES-2087 / MED4).